Reading from the N-terminus, the 208-residue chain is Large ribosomal subunit protein bL25 (208 aa).

The disordered stretch occupies residues 1–21 (MSNEFSLNAEKRDVQGKGASR).

This sequence belongs to the bacterial ribosomal protein bL25 family. CTC subfamily. Part of the 50S ribosomal subunit; part of the 5S rRNA/L5/L18/L25 subcomplex. Contacts the 5S rRNA. Binds to the 5S rRNA independently of L5 and L18.

In terms of biological role, this is one of the proteins that binds to the 5S RNA in the ribosome where it forms part of the central protuberance. In Hahella chejuensis (strain KCTC 2396), this protein is Large ribosomal subunit protein bL25.